The sequence spans 152 residues: Large ribosomal subunit protein bL9 (152 aa).

It belongs to the bacterial ribosomal protein bL9 family.

Functionally, binds to the 23S rRNA. This is Large ribosomal subunit protein bL9 from Rippkaea orientalis (strain PCC 8801 / RF-1) (Cyanothece sp. (strain PCC 8801)).